The following is a 176-amino-acid chain: MSSDLKKINKVKKNSRRISNTQEPKLVERLIKISRVSKVTKGGKKLSFRAIVVVGDENGKVGVGVAKADDVVNAFKKAKTDGRKNLIELPITKALSIPHNVAGNFGACKVIMRPSIEGSGVIAGGAVRIVLEVAGVKNVIAKQLGSNNLLNNARASVCALQNLTTKAQVAKKRNLD.

An S5 DRBM domain is found at L26–L89.

It belongs to the universal ribosomal protein uS5 family. As to quaternary structure, part of the 30S ribosomal subunit. Contacts protein S4.

It is found in the plastid. It localises to the chloroplast. With S4 and S12 plays an important role in translational accuracy. The protein is Small ribosomal subunit protein uS5c (rps5) of Phaeodactylum tricornutum (strain CCAP 1055/1).